We begin with the raw amino-acid sequence, 340 residues long: DNA repair protein RAD51 homolog A (340 aa).

Positions 1–14 (MSSAAQQQQKAAAA) are enriched in low complexity. Positions 1–21 (MSSAAQQQQKAAAAEQEEVEH) are disordered. A HhH domain is found at 49–78 (TVEAVAYTPRKDLLQIKGISEAKADKIIEA). 128-135 (GEFRSGKT) provides a ligand contact to ATP.

Belongs to the RecA family. RAD51 subfamily. As to quaternary structure, self-associates and may interact with XRCC3 homolog. In terms of tissue distribution, highly expressed in mitotic and meiotic tissues, but low levels in differentiated tissues.

It is found in the nucleus. Its function is as follows. Binds to single and double-stranded DNA and exhibits DNA-dependent ATPase activity. Unwinds duplex DNA. Component of the meiotic recombination pathway. Seems to play a role in mediating chromosome homology search, chromosome pairing and synapsis at early stages and probably chromosome crossing-over at later stages in meiosis. Probably is involved in the repair of meiotic double strand breaks (DBSs) and in homologous recombination. This chain is DNA repair protein RAD51 homolog A (RAD51A), found in Zea mays (Maize).